The primary structure comprises 394 residues: ATP phosphoribosyltransferase regulatory subunit (394 aa).

It belongs to the class-II aminoacyl-tRNA synthetase family. HisZ subfamily. Heteromultimer composed of HisG and HisZ subunits.

The protein localises to the cytoplasm. It participates in amino-acid biosynthesis; L-histidine biosynthesis; L-histidine from 5-phospho-alpha-D-ribose 1-diphosphate: step 1/9. In terms of biological role, required for the first step of histidine biosynthesis. May allow the feedback regulation of ATP phosphoribosyltransferase activity by histidine. This chain is ATP phosphoribosyltransferase regulatory subunit, found in Geobacillus kaustophilus (strain HTA426).